Reading from the N-terminus, the 602-residue chain is Cytokine-like nuclear factor N-PAC (602 aa).

Residues S8 and S10 each carry the phosphoserine modification. Residues 22–81 (PKDLIWAKMKGFTPWPGMIVDPPLDLLSQQRRANTKCVFFFGSRNFAWIEENNIKPFEGP) enclose the PWWP domain. The segment at 162 to 262 (GSPDEGDGLD…ASSTPTGRRR (101 aa)) is disordered. Polar residues-rich tracts occupy residues 176-188 (ADSSASPVTSPAV), 204-217 (AATSVKSTKGSAKS), and 224-233 (SAQQSPSGPS). A phosphoserine mark is found at S224, S228, and S243. Residues 309 to 602 (RDIVPSEQTF…SSAVFVRSRF (294 aa)) form a dehydrogenase domain region. Residues 319 to 333 (GFLGLGMMGSTIVKD), T411, and R554 each bind NAD(+).

This sequence belongs to the HIBADH-related family. NP60 subfamily. In terms of assembly, binds to mononucleosomes. Interacts with male-specific lethal (MSL) histone acetyltransferase complex at least composed of mof, msl-1, msl-2 and msl-3.

The protein resides in the chromosome. Nucleosome-destabilizing factor that is recruited to genes during transcriptional activation and colocalizes with a subset of trimethylated 'Lys-36' histone H3 (H3K36me3)-enriched regions. Binds DNA (in vitro). Facilitates Pol II transcription through nucleosomes. Facilitates male-specific lethal (MSL) histone acetyltransferase complex targeting to active genes on the X chromosome. Stimulates the acetylation of 'Lys-56' of nucleosomal histone H3 (H3K56ac) by nej. May have oxidoreductase activity. The sequence is that of Cytokine-like nuclear factor N-PAC from Drosophila melanogaster (Fruit fly).